The sequence spans 2803 residues: Microtubule-associated protein 1A (2803 aa).

S114, S117, S118, S121, and S155 each carry phosphoserine. Position 177 is a phosphotyrosine (Y177). Disordered stretches follow at residues 302–466 (GAVP…DLKP) and 486–516 (IDRS…PLPT). S319, S322, and S384 each carry phosphoserine. A compositionally biased stretch (basic and acidic residues) spans 335-390 (AKREEVVEEGAKEARSELAKELAKTEKKAKESSEKPPEKPAKPERVKTESSEALKA). Residues 391-406 (EKRKLIKDKVGKKHLK) are compositionally biased toward basic residues. Composition is skewed to basic and acidic residues over residues 407–464 (EKIS…KPDL) and 486–499 (IDRS…KELS). A run of 8 repeats spans residues 415 to 417 (KKD), 420 to 422 (KKE), 427 to 429 (RKE), 431 to 433 (KKD), 436 to 438 (RKE), 440 to 442 (KKD), 444 to 446 (KKE), and 449 to 451 (RKD). Positions 415–541 (KKDKEKKEIK…TQDFEEMKRE (127 aa)) are 9 X 3 AA repeats of K-K-[DE]. T504 carries the phosphothreonine modification. Residues S526 and S527 each carry the phosphoserine modification. The stretch at 539-541 (KRE) is repeat 9. Basic and acidic residues-rich tracts occupy residues 539-554 (KREE…DTGL) and 585-596 (QEEHVMKEKELV). 5 disordered regions span residues 539–712 (KREE…KAPE), 734–806 (YIQD…GTPE), 847–1080 (EDQS…VNID), 1109–1548 (TGPI…EKKD), and 1573–1605 (EENH…EKVK). A phosphoserine mark is found at S605 and S612. The residue at position 616 (T616) is a Phosphothreonine. A compositionally biased stretch (basic and acidic residues) spans 623 to 667 (WEEKKQREAERLPDRTEAREESEPEVKEDVIEKAELEEMEEVHPS). Phosphoserine is present on residues S644, S667, and S787. 2 stretches are compositionally biased toward polar residues: residues 847-860 (EDQS…PQTE) and 871-883 (TVTS…TEAT). Phosphoserine occurs at positions 874, 877, 878, and 891. T894 carries the post-translational modification Phosphothreonine. Phosphoserine occurs at positions 896, 900, 909, 986, 996, 1004, 1013, 1019, and 1029. Positions 1031 to 1065 (GDTKRTPGVGKEDAAEETVKPGPEEGTLEKEEKVP) are enriched in basic and acidic residues. Phosphoserine is present on residues S1069, S1144, S1146, S1160, S1172, S1190, S1200, S1203, S1209, S1218, S1221, and S1264. A compositionally biased stretch (basic and acidic residues) spans 1131-1146 (KPQKDEVLRYPDRSLS). Polar residues predominate over residues 1154 to 1169 (SVLSVPSPDTANQEPT). Polar residues-rich tracts occupy residues 1211-1224 (DVSS…SLGT) and 1264-1278 (SPPT…AQTD). Residues 1289–1299 (PASSFSHSTPS) are compositionally biased toward low complexity. A phosphoserine mark is found at S1326, S1329, S1544, S1600, and S1626. 2 stretches are compositionally biased toward basic and acidic residues: residues 1338 to 1548 (IAIK…EKKD) and 1586 to 1605 (QEDK…EKVK). Basic and acidic residues predominate over residues 1632-1642 (RAREQEEKYWR). 3 disordered regions span residues 1632-1684 (RARE…RYWR), 1713-1879 (DGQG…FSWG), and 1892-2673 (EGAA…LVNG). S1654 carries the phosphoserine modification. The span at 1655-1666 (PTREEPAGEQKE) shows a compositional bias: basic and acidic residues. Phosphoserine occurs at positions 1675, 1749, 1762, 1776, 1791, 1797, 1801, 1812, and 1818. Over residues 1852–1867 (LPPAPLSPAPGPPTPA) the composition is skewed to pro residues. Basic and acidic residues predominate over residues 1907–1929 (KDYRKAEGEREEEGRAEAPDKSS). S1931 is modified (phosphoserine). Residues 1951 to 1964 (PEQREPTPYPDERS) show a composition bias toward basic and acidic residues. T1957 is modified (phosphothreonine). A compositionally biased stretch (polar residues) spans 2019–2033 (SPISPKSLQSDTPTF). S2022 is subject to Phosphoserine. Over residues 2042–2066 (TVPPRPEPGPSMEPSLTPPAVPPRA) the composition is skewed to pro residues. At T2058 the chain carries Phosphothreonine. Phosphoserine occurs at positions 2074, 2104, 2106, and 2108. The segment covering 2086-2122 (PDRRSPSPKESGRSHWDDSTSDSELEKGAREQPEKEA) has biased composition (basic and acidic residues). The segment covering 2175–2184 (PAPPQLPSPA) has biased composition (pro residues). 5 positions are modified to phosphoserine: S2235, S2252, S2256, S2259, and S2260. The segment covering 2257 to 2268 (EGSSSEATTPVI) has biased composition (polar residues). Low complexity predominate over residues 2312-2325 (ASLDLALAPAPSLP). Position 2449 is a phosphoserine (S2449). Residues 2461-2473 (IDDRDLSTEEVRL) are compositionally biased toward basic and acidic residues. Positions 2502-2514 (SASDSGSSQSDSD) are enriched in low complexity. Residues 2559 to 2575 (DPPPLPQPDPRPSPPRP) show a composition bias toward pro residues. The span at 2590-2602 (GRVERLREKEKVQ) shows a compositional bias: basic and acidic residues. A phosphoserine mark is found at S2649 and S2664.

It belongs to the MAP1 family. As to quaternary structure, 3 different light chains, LC1 (a cleavage product of MAP1B), LC2 (a cleavage product of MAP1A) and LC3 (produced by one of the MAP1LC3 genes), can associate with the MAP1A or MAP1B heavy chains. Interacts with TIAM2. Interacts with guanylate kinase-like domain of DLG1, DLG2 and DLG4. Binds to CSNK1D. In terms of assembly, interacts with ELAVL4. Phosphorylated by CSNK1D. In terms of processing, LC2 is generated from MAP1A by proteolytic processing. Brain.

Its subcellular location is the cytoplasm. It is found in the cytoskeleton. Structural protein involved in the filamentous cross-bridging between microtubules and other skeletal elements. In Homo sapiens (Human), this protein is Microtubule-associated protein 1A (MAP1A).